Consider the following 426-residue polypeptide: Tyrosine--tRNA ligase (426 aa).

Position 38 (Y38) interacts with L-tyrosine. The 'HIGH' region signature appears at 43–52; the sequence is PTADSLHIGS. L-tyrosine is bound by residues Y176 and Q180. Residues 236–240 carry the 'KMSKS' region motif; that stretch reads KFGKT. K239 is a binding site for ATP. The 68-residue stretch at 359–426 folds into the S4 RNA-binding domain; it reads QTIVEVLTQS…KKLFNLYIWK (68 aa).

The protein belongs to the class-I aminoacyl-tRNA synthetase family. TyrS type 1 subfamily. In terms of assembly, homodimer.

The protein localises to the cytoplasm. The enzyme catalyses tRNA(Tyr) + L-tyrosine + ATP = L-tyrosyl-tRNA(Tyr) + AMP + diphosphate + H(+). Its function is as follows. Catalyzes the attachment of tyrosine to tRNA(Tyr) in a two-step reaction: tyrosine is first activated by ATP to form Tyr-AMP and then transferred to the acceptor end of tRNA(Tyr). The polypeptide is Tyrosine--tRNA ligase (Aliivibrio salmonicida (strain LFI1238) (Vibrio salmonicida (strain LFI1238))).